Consider the following 545-residue polypeptide: Prolyl 3-hydroxylase OGFOD1 (545 aa).

The interval 1–23 (MNGKRPADPGPARPMKKGKKQVS) is disordered. One can recognise a Fe2OG dioxygenase domain in the interval 137–239 (PTIDMSCAKY…RLSISGWFYG (103 aa)). Residues H155 and D157 each contribute to the Fe cation site. Y169 is a binding site for 2-oxoglutarate. H218 contacts Fe cation. R230 lines the 2-oxoglutarate pocket. Acidic residues predominate over residues 371–380 (SEDDETEEKG). A disordered region spans residues 371–437 (SEDDETEEKG…EAKKESSVPM (67 aa)). The segment covering 383–393 (ETASAAAGTEE) has biased composition (low complexity). The span at 402-417 (PENNQVAAGSHSQENG) shows a compositional bias: polar residues.

Belongs to the TPA1 family. Monomer. It depends on Fe(2+) as a cofactor. L-ascorbate is required as a cofactor.

It localises to the cytoplasm. The protein resides in the nucleus. It catalyses the reaction [ribosomal protein uS12]-L-proline + 2-oxoglutarate + O2 = [ribosomal protein uS12]-(3S)-3-hydroxy-L-proline + succinate + CO2. Its function is as follows. Prolyl 3-hydroxylase that catalyzes 3-hydroxylation of 'Pro-62' of small ribosomal subunit uS12 (RPS23), thereby regulating protein translation termination efficiency. Involved in stress granule formation. This Mus musculus (Mouse) protein is Prolyl 3-hydroxylase OGFOD1 (Ogfod1).